The following is a 519-amino-acid chain: MKVQSFDALYDEDSLMQKASRQEFSKYVDHIGTEGMQARSGLLQERQYPHLNALVDELMRQNPRLNDSLKERLELLRTGEAQVVITGQQTGIFGGPMYAVYKLLTCLKVARQTEELLNRPVLPIFWLATEDHDFDEINHLIVPTHDFRTRKLAIQAPDSISRSVSRLAFDQTAVKDIVRQALCTERETPYTKELLALSDRLIESSTTYGEFFASFMGELVDHDIIFFDADTEAVRQLEIPFFERLIQDNAEIRQALSKGIQETTELPDTFLNEEAAHLFVEDIGRDLLYPGQDFVTKQGKTYTELELLALLYASPERFSNSVVTRPLMQDYLFPTLAYIGGPGEIAYWTRLRPLFHHFDWTMPVLIPRMGAVMLQARDEKGLRRHGLSLEQVLHTGVPLTPFDAAAIKRHLHDATLLGTVLVEEVTRIEQQELRTTAVATKLNKQLQLAVETIVDQKRRLHEQANRSDRALQYQLAPDHAPQERIHSILPWLNRYGLNLVQTLRMHYEQTEAEQLKIML.

2 coiled-coil regions span residues 51-71 (LNAL…SLKE) and 440-464 (TKLN…HEQA).

It belongs to the BshC family.

Involved in bacillithiol (BSH) biosynthesis. May catalyze the last step of the pathway, the addition of cysteine to glucosamine malate (GlcN-Mal) to generate BSH. In Exiguobacterium sibiricum (strain DSM 17290 / CCUG 55495 / CIP 109462 / JCM 13490 / 255-15), this protein is Putative cysteine ligase BshC.